The sequence spans 518 residues: Membrane-bound lytic murein transglycosylase F (518 aa).

Positions 1 to 21 (MKKLKINYLFIGILALLLAVA) are cleaved as a signal peptide. The interval 22-269 (LWPSIPWFGK…RIEEKYLGHG (248 aa)) is non-LT domain. An LT domain region spans residues 270–518 (DDFDYVDTRT…SRKGSEEKQN (249 aa)). The active site involves glutamate 314.

It in the N-terminal section; belongs to the bacterial solute-binding protein 3 family. The protein in the C-terminal section; belongs to the transglycosylase Slt family.

Its subcellular location is the cell outer membrane. It catalyses the reaction Exolytic cleavage of the (1-&gt;4)-beta-glycosidic linkage between N-acetylmuramic acid (MurNAc) and N-acetylglucosamine (GlcNAc) residues in peptidoglycan, from either the reducing or the non-reducing ends of the peptidoglycan chains, with concomitant formation of a 1,6-anhydrobond in the MurNAc residue.. Functionally, murein-degrading enzyme that degrades murein glycan strands and insoluble, high-molecular weight murein sacculi, with the concomitant formation of a 1,6-anhydromuramoyl product. Lytic transglycosylases (LTs) play an integral role in the metabolism of the peptidoglycan (PG) sacculus. Their lytic action creates space within the PG sacculus to allow for its expansion as well as for the insertion of various structures such as secretion systems and flagella. The protein is Membrane-bound lytic murein transglycosylase F of Escherichia coli (strain SMS-3-5 / SECEC).